A 524-amino-acid chain; its full sequence is 2-isopropylmalate synthase (524 aa).

A Pyruvate carboxyltransferase domain is found at 15–275 (VVVFDTTMRD…PYGTSVDPVH (261 aa)). Mn(2+)-binding residues include aspartate 24, histidine 212, histidine 214, and asparagine 248. The interval 401 to 524 (RVSRLRVVAG…RPEAAIASGF (124 aa)) is regulatory domain.

Belongs to the alpha-IPM synthase/homocitrate synthase family. LeuA type 1 subfamily. As to quaternary structure, homodimer. Mn(2+) is required as a cofactor.

The protein localises to the cytoplasm. The enzyme catalyses 3-methyl-2-oxobutanoate + acetyl-CoA + H2O = (2S)-2-isopropylmalate + CoA + H(+). It functions in the pathway amino-acid biosynthesis; L-leucine biosynthesis; L-leucine from 3-methyl-2-oxobutanoate: step 1/4. Its function is as follows. Catalyzes the condensation of the acetyl group of acetyl-CoA with 3-methyl-2-oxobutanoate (2-ketoisovalerate) to form 3-carboxy-3-hydroxy-4-methylpentanoate (2-isopropylmalate). This Caulobacter vibrioides (strain ATCC 19089 / CIP 103742 / CB 15) (Caulobacter crescentus) protein is 2-isopropylmalate synthase.